Consider the following 419-residue polypeptide: Light-independent protochlorophyllide reductase subunit N (419 aa).

The [4Fe-4S] cluster site is built by Cys20, Cys45, and Cys102.

It belongs to the BchN/ChlN family. Protochlorophyllide reductase is composed of three subunits; BchL, BchN and BchB. Forms a heterotetramer of two BchB and two BchN subunits. [4Fe-4S] cluster is required as a cofactor.

The enzyme catalyses chlorophyllide a + oxidized 2[4Fe-4S]-[ferredoxin] + 2 ADP + 2 phosphate = protochlorophyllide a + reduced 2[4Fe-4S]-[ferredoxin] + 2 ATP + 2 H2O. It participates in porphyrin-containing compound metabolism; bacteriochlorophyll biosynthesis (light-independent). In terms of biological role, component of the dark-operative protochlorophyllide reductase (DPOR) that uses Mg-ATP and reduced ferredoxin to reduce ring D of protochlorophyllide (Pchlide) to form chlorophyllide a (Chlide). This reaction is light-independent. The NB-protein (BchN-BchB) is the catalytic component of the complex. The chain is Light-independent protochlorophyllide reductase subunit N from Chlorobaculum tepidum (strain ATCC 49652 / DSM 12025 / NBRC 103806 / TLS) (Chlorobium tepidum).